Consider the following 403-residue polypeptide: Deubiquitinase and deneddylase Dub1 (403 aa).

Polar residues predominate over residues 1–11 (MLSPTNSTSKT). The segment at 1-24 (MLSPTNSTSKTAPVPPRDSSKPVL) is disordered. The chain crosses the membrane as a helical span at residues 40–60 (TALAVLLVVVTLGLILLFYSF). Positions 77–132 (KEQPTISIPVPLPSPPLAVPRPSTPPAPTPAISRPSTPSAPKPSTPPPLLPKAPKP) are disordered. 2 stretches are compositionally biased toward pro residues: residues 86-105 (VPLP…PAPT) and 114-130 (PSAP…PKAP). Residues His-277, Asp-294, and Cys-347 contribute to the active site.

This sequence belongs to the peptidase C48 family.

It is found in the secreted. The protein localises to the host cell. The protein resides in the membrane. In terms of biological role, effector proteins function to alter host cell physiology and promote bacterial survival in host tissues. This protease possesses deubiquitinating and deneddylating activities. The chain is Deubiquitinase and deneddylase Dub1 (cdu1) from Chlamydia trachomatis serovar L2b (strain UCH-1/proctitis).